We begin with the raw amino-acid sequence, 341 residues long: UDP-3-O-(3-hydroxymyristoyl)glucosamine N-acyltransferase (341 aa).

H239 (proton acceptor) is an active-site residue.

It belongs to the transferase hexapeptide repeat family. LpxD subfamily. Homotrimer.

The catalysed reaction is a UDP-3-O-[(3R)-3-hydroxyacyl]-alpha-D-glucosamine + a (3R)-hydroxyacyl-[ACP] = a UDP-2-N,3-O-bis[(3R)-3-hydroxyacyl]-alpha-D-glucosamine + holo-[ACP] + H(+). It carries out the reaction UDP-3-O-[(3R)-3-hydroxytetradecanoyl]-alpha-D-glucosamine + (3R)-hydroxytetradecanoyl-[ACP] = UDP-2-N,3-O-bis[(3R)-3-hydroxytetradecanoyl]-alpha-D-glucosamine + holo-[ACP] + H(+). It functions in the pathway glycolipid biosynthesis; lipid IV(A) biosynthesis; lipid IV(A) from (3R)-3-hydroxytetradecanoyl-[acyl-carrier-protein] and UDP-N-acetyl-alpha-D-glucosamine: step 3/6. Catalyzes the N-acylation of UDP-3-O-(hydroxytetradecanoyl)glucosamine using 3-hydroxytetradecanoyl-ACP as the acyl donor. Is involved in the biosynthesis of lipid A, a phosphorylated glycolipid that anchors the lipopolysaccharide to the outer membrane of the cell. This is UDP-3-O-(3-hydroxymyristoyl)glucosamine N-acyltransferase from Salmonella choleraesuis (strain SC-B67).